A 299-amino-acid chain; its full sequence is Riboflavin transporter ImpX (299 aa).

EamA domains are found at residues 6 to 144 and 162 to 294; these read KGAL…YLLT and SLYS…SIIK. Helical transmembrane passes span 7 to 27, 34 to 54, 68 to 88, 101 to 121, 129 to 149, 158 to 178, 202 to 222, 224 to 244, 253 to 273, and 276 to 296; these read GALL…ALTP, VPFV…ILFG, DLFF…LCIV, VVTL…RLLL, YLFW…EFHL, LLPA…ATVF, IMFV…ATAG, WLIF…LYYF, VATM…YLIN, and VLSP…IKIS.

This sequence belongs to the EamA transporter family.

The protein localises to the cell membrane. In terms of biological role, transports riboflavin into the cell. The polypeptide is Riboflavin transporter ImpX (Fusobacterium nucleatum subsp. nucleatum (strain ATCC 23726 / VPI 4351)).